The sequence spans 705 residues: Complement C1r subcomponent (705 aa).

The N-terminal stretch at 1 to 17 is a signal peptide; sequence MWLLYLLVPALFCRAGG. Residues 18-141 form the CUB 1 domain; it reads SIPIPQKLFG…KGFLAYYQAV (124 aa). Ca(2+) contacts are provided by Glu66, Asp74, and Asp119. A disulfide bond links Cys71 and Cys89. Residue Asn125 is glycosylated (N-linked (GlcNAc...) asparagine). Asp142, Leu143, and Glu145 together coordinate Ca(2+). The 49-residue stretch at 142-190 folds into the EGF-like; calcium-binding domain; it reads DLDECASRSKSGEEDPQPQCQHLCHNYVGGYFCSCRPGYELQEDTHSCQ. 4 cysteine pairs are disulfide-bonded: Cys146/Cys165, Cys161/Cys174, Cys176/Cys189, and Cys193/Cys220. Asn167, Tyr168, and Gly171 together coordinate Ca(2+). A (3R)-3-hydroxyasparagine modification is found at Asn167. The CUB 2 domain occupies 193 to 305; sequence CSSELYTEAS…RGWKLRYTTE (113 aa). Phosphoserine; by CK2 is present on Ser206. N-linked (GlcNAc...) asparagine glycosylation occurs at Asn221. 4 residues coordinate Ca(2+): Asp243, Asp253, Asp290, and Asp294. Cys250 and Cys268 form a disulfide bridge. 2 consecutive Sushi domains span residues 307–373 and 374–449; these read IKCP…RCKI and KDCG…RCLP. 5 disulfides stabilise this stretch: Cys309–Cys358, Cys338–Cys371, Cys376–Cys429, Cys406–Cys447, and Cys451–Cys577. Positions 464–702 constitute a Peptidase S1 domain; it reads IIGGQKAKMG…YVDWIKKEME (239 aa). The active-site Charge relay system is His502. Residue Asn514 is glycosylated (N-linked (GlcNAc...) asparagine). Residue Asp557 is the Charge relay system of the active site. Asn581 is a glycosylation site (N-linked (GlcNAc...) asparagine). Cystine bridges form between Cys620–Cys639 and Cys650–Cys680. Ser654 functions as the Charge relay system in the catalytic mechanism.

Belongs to the peptidase S1 family. As to quaternary structure, core component of the complement C1 complex, a calcium-dependent complex composed of 1 molecule of the C1Q subcomplex, 2 molecules of C1R and 2 molecules of C1S. The C1Q subcomplex is composed 18 subunits: 3 chains of C1QA, C1QB, and C1QC trimerize to form 6 collagen-like triple helices connected to six globular ligand-recognition modules. Within the C1 complex, C1R is a dimer of identical chains, each of which is activated by cleavage into two chains, heavy and light, connected by disulfide bonds. In terms of processing, cleaved and activated by autocatalytic processing to generate Complement C1r subcomponent heavy and light chains that are connected by disulfide bonds. The iron and 2-oxoglutarate dependent 3-hydroxylation of aspartate and asparagine is (R) stereospecific within EGF domains.

It is found in the secreted. It localises to the cell surface. It carries out the reaction Selective cleavage of Lys(or Arg)-|-Ile bond in complement subcomponent C1s to form the active form of C1s (EC 3.4.21.42).. With respect to regulation, activated by the C1Q subcomplex of the C1 complex following C1Q binding to immunoglobulins (IgG or IgM) complexed with antigens to form antigen-antibody complexes on the surface of pathogens. Immunoglobulin-binding promotes autoactivation of C1R, which results in the cleavage of the Arg-Ile bond in the catalytic domain. Serine protease component of the complement C1 complex, a multiprotein complex that initiates the classical pathway of the complement system, a cascade of proteins that leads to phagocytosis and breakdown of pathogens and signaling that strengthens the adaptive immune system. C1R catalyzes the first enzymatic step in the classical complement pathway: it is activated by the C1Q subcomplex of the C1 complex, which associates with IgG or IgM immunoglobulins complexed with antigens to form antigen-antibody complexes on the surface of pathogens. Immunoglobulin-binding promotes the autocatalytic cleavage and activation of C1R. Activated C1R then cleaves and activates C1S, the second protease of the classical complement pathway. It is unclear if C1R activates C1S within single, strained C1 complexes or between neighboring C1 complexes on surfaces. This Homo sapiens (Human) protein is Complement C1r subcomponent.